The primary structure comprises 108 residues: U-scoloptoxin(10)-Sm1a (108 aa).

The first 24 residues, 1 to 24 (MNKQWLHFFSVLLLCYVIEETCSL), serve as a signal peptide directing secretion.

Belongs to the scoloptoxin-10 family. Post-translationally, contains 3 disulfide bonds. Expressed by the venom gland.

Its subcellular location is the secreted. The protein is U-scoloptoxin(10)-Sm1a of Scolopendra morsitans (Tanzanian blue ringleg centipede).